Here is a 545-residue protein sequence, read N- to C-terminus: GMP synthase [glutamine-hydrolyzing] (545 aa).

Residues 17 to 211 (TVLVLDMGSQ…ATKICGARPD (195 aa)) enclose the Glutamine amidotransferase type-1 domain. The active-site Nucleophile is C93. Catalysis depends on residues H185 and E187. The 209-residue stretch at 212–420 (WKMDDFSARE…LGIHEELIGR (209 aa)) folds into the GMPS ATP-PPase domain. ATP is bound at residue 240–246 (SGGVDST). R313, D482, K537, and E543 together coordinate XMP.

In terms of assembly, homodimer. Mg(2+) is required as a cofactor.

It localises to the cytoplasm. The protein resides in the cytosol. The enzyme catalyses XMP + L-glutamine + ATP + H2O = GMP + L-glutamate + AMP + diphosphate + 2 H(+). The protein operates within purine metabolism; GMP biosynthesis; GMP from XMP (L-Gln route): step 1/1. In terms of biological role, catalyzes the conversion of xanthine monophosphate (XMP) to GMP in the presence of glutamine and ATP through an adenyl-XMP intermediate. The chain is GMP synthase [glutamine-hydrolyzing] (GUA1) from Gibberella zeae (strain ATCC MYA-4620 / CBS 123657 / FGSC 9075 / NRRL 31084 / PH-1) (Wheat head blight fungus).